The chain runs to 185 residues: MIQTIDLKKGMVFEKDGKLLKVLAINHHKPGKGNTLMQMDIQDVRSGSIVHTTMRPSEKVEQVMVNKKNAQYLYDEGNTSVFMDLETYEQYEIDQSQISEEKKYLTENMQVQMNFVDSELVGVELPATVTLEVVETQPEIKGATIDGGGKPATMNTGLVVTVPSFVKNGDKIIVNTSDGAYKSRA.

This sequence belongs to the elongation factor P family.

It is found in the cytoplasm. Its pathway is protein biosynthesis; polypeptide chain elongation. Functionally, involved in peptide bond synthesis. Stimulates efficient translation and peptide-bond synthesis on native or reconstituted 70S ribosomes in vitro. Probably functions indirectly by altering the affinity of the ribosome for aminoacyl-tRNA, thus increasing their reactivity as acceptors for peptidyl transferase. This chain is Elongation factor P, found in Limosilactobacillus fermentum (strain NBRC 3956 / LMG 18251) (Lactobacillus fermentum).